The chain runs to 124 residues: uncharacterized protein (124 aa).

An N-terminal signal peptide occupies residues 1-21 (MFLLSLLHFFHPSLIPSLSLS).

This is an uncharacterized protein from Schizosaccharomyces pombe (strain 972 / ATCC 24843) (Fission yeast).